A 263-amino-acid polypeptide reads, in one-letter code: Imidazole glycerol phosphate synthase subunit HisF (263 aa).

Catalysis depends on residues Asp11 and Asp130.

This sequence belongs to the HisA/HisF family. In terms of assembly, heterodimer of HisH and HisF.

Its subcellular location is the cytoplasm. The catalysed reaction is 5-[(5-phospho-1-deoxy-D-ribulos-1-ylimino)methylamino]-1-(5-phospho-beta-D-ribosyl)imidazole-4-carboxamide + L-glutamine = D-erythro-1-(imidazol-4-yl)glycerol 3-phosphate + 5-amino-1-(5-phospho-beta-D-ribosyl)imidazole-4-carboxamide + L-glutamate + H(+). It participates in amino-acid biosynthesis; L-histidine biosynthesis; L-histidine from 5-phospho-alpha-D-ribose 1-diphosphate: step 5/9. In terms of biological role, IGPS catalyzes the conversion of PRFAR and glutamine to IGP, AICAR and glutamate. The HisF subunit catalyzes the cyclization activity that produces IGP and AICAR from PRFAR using the ammonia provided by the HisH subunit. The polypeptide is Imidazole glycerol phosphate synthase subunit HisF (Herpetosiphon aurantiacus (strain ATCC 23779 / DSM 785 / 114-95)).